A 321-amino-acid polypeptide reads, in one-letter code: Polyamine aminopropyltransferase (321 aa).

The 234-residue stretch at 23-256 (HLLYLEHAGP…DEWSFSFGSD (234 aa)) folds into the PABS domain. Glutamine 53 provides a ligand contact to S-methyl-5'-thioadenosine. Histidine 84 and aspartate 108 together coordinate spermidine. Residues glutamate 127 and 159-160 (DG) contribute to the S-methyl-5'-thioadenosine site. Aspartate 177 serves as the catalytic Proton acceptor.

Belongs to the spermidine/spermine synthase family. Homodimer or homotetramer.

The protein localises to the cytoplasm. The enzyme catalyses S-adenosyl 3-(methylsulfanyl)propylamine + putrescine = S-methyl-5'-thioadenosine + spermidine + H(+). It functions in the pathway amine and polyamine biosynthesis; spermidine biosynthesis; spermidine from putrescine: step 1/1. Its function is as follows. Catalyzes the irreversible transfer of a propylamine group from the amino donor S-adenosylmethioninamine (decarboxy-AdoMet) to putrescine (1,4-diaminobutane) to yield spermidine. The chain is Polyamine aminopropyltransferase from Korarchaeum cryptofilum (strain OPF8).